The sequence spans 362 residues: S-adenosylmethionine:tRNA ribosyltransferase-isomerase (362 aa).

The protein belongs to the QueA family. Monomer.

It is found in the cytoplasm. The catalysed reaction is 7-aminomethyl-7-carbaguanosine(34) in tRNA + S-adenosyl-L-methionine = epoxyqueuosine(34) in tRNA + adenine + L-methionine + 2 H(+). It functions in the pathway tRNA modification; tRNA-queuosine biosynthesis. Transfers and isomerizes the ribose moiety from AdoMet to the 7-aminomethyl group of 7-deazaguanine (preQ1-tRNA) to give epoxyqueuosine (oQ-tRNA). The polypeptide is S-adenosylmethionine:tRNA ribosyltransferase-isomerase (Yersinia enterocolitica serotype O:8 / biotype 1B (strain NCTC 13174 / 8081)).